The chain runs to 196 residues: Hypoxanthine/guanine phosphoribosyltransferase (196 aa).

The protein belongs to the purine/pyrimidine phosphoribosyltransferase family. Archaeal HPRT subfamily. In terms of assembly, homodimer.

The protein localises to the cytoplasm. It catalyses the reaction IMP + diphosphate = hypoxanthine + 5-phospho-alpha-D-ribose 1-diphosphate. It carries out the reaction GMP + diphosphate = guanine + 5-phospho-alpha-D-ribose 1-diphosphate. Its pathway is purine metabolism; IMP biosynthesis via salvage pathway; IMP from hypoxanthine: step 1/1. Functionally, catalyzes a salvage reaction resulting in the formation of IMP that is energically less costly than de novo synthesis. The sequence is that of Hypoxanthine/guanine phosphoribosyltransferase from Methanocaldococcus sp. (strain FS406-22).